Consider the following 430-residue polypeptide: MLSRLFLRHSNLRFVTLVSSKSNSQIFSSFIRPLSTNSSGGGGNGDGNGRNRNDVPWSFTGVNDDKSGPFSSDDSFGSSGVAGSGLPGGEGKWPEEPKRWNIKEEEEKVVFDTGGEVGQGIETSRERRGNEWEETKRWDMKEGEEKVVFGGGGDEVDGFGIRGEVKSNEWDVSKPWNLKEEEEGVVFDTGGEVPFSFENSLEMAEEERVKKELIEKEEKELLEVIKGPDRAFGDLIAKSGITDEMLDSLIALKDFQGVEGLPPLTEIENLRREKSSKKSSRAEIELQMQEDIAKARVRQVDETGRAYGTGRRKCSIARVWIQPGEGKFQVNEKEFDVYFPMLDHRAALLRPLAETKTLGRWDIKCTVKGGGTTGQVGAIQLGISRALQNWEPDMRTSLRAAGFLTRDSRVVERKKPGKAKARKSFQWVKR.

Residues 1-34 (MLSRLFLRHSNLRFVTLVSSKSNSQIFSSFIRPL) constitute a mitochondrion transit peptide. The segment at 32–97 (RPLSTNSSGG…GGEGKWPEEP (66 aa)) is disordered. Residues 39 to 48 (SGGGGNGDGN) show a composition bias toward gly residues. Low complexity predominate over residues 68–79 (GPFSSDDSFGSS). Over residues 80-91 (GVAGSGLPGGEG) the composition is skewed to gly residues.

The protein belongs to the universal ribosomal protein uS9 family. Interacts (via C terminus) with PIA2. Component of the mitochondrial ribosome small subunit. In terms of tissue distribution, expressed in root tips, young leaves, flowers and siliques.

It localises to the mitochondrion. Functionally, mitochondrial ribosomal protein required for central cell maturation. May work together with PIA2 in controlling female gametophyte development, possibly by regulating the expression of some mitochondrial proteins. In Arabidopsis thaliana (Mouse-ear cress), this protein is Small ribosomal subunit protein uS9m.